Consider the following 363-residue polypeptide: Ribosome-binding ATPase YchF (363 aa).

The region spanning 3-256 (FKCGIVGLPN…LDDDEKIEFL (254 aa)) is the OBG-type G domain. 12–17 (NVGKST) provides a ligand contact to ATP. The Mg(2+) site is built by S16 and T36. The region spanning 278 to 361 (NLQTYFTAGV…QDGDVMHFRF (84 aa)) is the TGS domain.

The protein belongs to the TRAFAC class OBG-HflX-like GTPase superfamily. OBG GTPase family. YchF/OLA1 subfamily. Mg(2+) serves as cofactor.

Functionally, ATPase that binds to both the 70S ribosome and the 50S ribosomal subunit in a nucleotide-independent manner. The protein is Ribosome-binding ATPase YchF of Pasteurella multocida (strain Pm70).